Consider the following 251-residue polypeptide: Imidazole glycerol phosphate synthase subunit HisF (251 aa).

Active-site residues include Asp-11 and Asp-130.

The protein belongs to the HisA/HisF family. Heterodimer of HisH and HisF.

The protein localises to the cytoplasm. It carries out the reaction 5-[(5-phospho-1-deoxy-D-ribulos-1-ylimino)methylamino]-1-(5-phospho-beta-D-ribosyl)imidazole-4-carboxamide + L-glutamine = D-erythro-1-(imidazol-4-yl)glycerol 3-phosphate + 5-amino-1-(5-phospho-beta-D-ribosyl)imidazole-4-carboxamide + L-glutamate + H(+). The protein operates within amino-acid biosynthesis; L-histidine biosynthesis; L-histidine from 5-phospho-alpha-D-ribose 1-diphosphate: step 5/9. Its function is as follows. IGPS catalyzes the conversion of PRFAR and glutamine to IGP, AICAR and glutamate. The HisF subunit catalyzes the cyclization activity that produces IGP and AICAR from PRFAR using the ammonia provided by the HisH subunit. This chain is Imidazole glycerol phosphate synthase subunit HisF, found in Thiobacillus denitrificans (strain ATCC 25259 / T1).